The following is a 108-amino-acid chain: UPF0145 protein LGAS_1099 (108 aa).

Belongs to the UPF0145 family.

This chain is UPF0145 protein LGAS_1099, found in Lactobacillus gasseri (strain ATCC 33323 / DSM 20243 / BCRC 14619 / CIP 102991 / JCM 1131 / KCTC 3163 / NCIMB 11718 / NCTC 13722 / AM63).